We begin with the raw amino-acid sequence, 900 residues long: Bifunctional uridylyltransferase/uridylyl-removing enzyme (900 aa).

The interval Met-1–Pro-342 is uridylyltransferase. Positions Leu-343–Thr-705 are uridylyl-removing. Residues Val-461–Leu-583 enclose the HD domain. ACT domains are found at residues Gln-706–Arg-789 and Ile-816–Ser-896.

Belongs to the GlnD family. Mg(2+) serves as cofactor.

The catalysed reaction is [protein-PII]-L-tyrosine + UTP = [protein-PII]-uridylyl-L-tyrosine + diphosphate. The enzyme catalyses [protein-PII]-uridylyl-L-tyrosine + H2O = [protein-PII]-L-tyrosine + UMP + H(+). Its activity is regulated as follows. Uridylyltransferase (UTase) activity is inhibited by glutamine, while glutamine activates uridylyl-removing (UR) activity. Functionally, modifies, by uridylylation and deuridylylation, the PII regulatory proteins (GlnB and homologs), in response to the nitrogen status of the cell that GlnD senses through the glutamine level. Under low glutamine levels, catalyzes the conversion of the PII proteins and UTP to PII-UMP and PPi, while under higher glutamine levels, GlnD hydrolyzes PII-UMP to PII and UMP (deuridylylation). Thus, controls uridylylation state and activity of the PII proteins, and plays an important role in the regulation of nitrogen fixation and metabolism. The protein is Bifunctional uridylyltransferase/uridylyl-removing enzyme of Stutzerimonas stutzeri (strain A1501) (Pseudomonas stutzeri).